The chain runs to 961 residues: RNA polymerase II subunit A C-terminal domain phosphatase (961 aa).

M1 carries the post-translational modification N-acetylmethionine. The 167-residue stretch at 178–344 folds into the FCP1 homology domain; sequence HRNRKLVLMV…SRESQTRKKV (167 aa). The tract at residues 328 to 589 is disordered; it reads DMNAPPGSRE…EEEDTDEDDH (262 aa). Over residues 394–406 the composition is skewed to basic and acidic residues; that stretch reads DSPRPGKPDERDI. Position 395 is a phosphoserine (S395). Residues 450–462 are compositionally biased toward acidic residues; the sequence is LDFDLSSDSESSS. Residues 463–475 are compositionally biased toward low complexity; that stretch reads ESEGTKSSSSASD. Acidic residues predominate over residues 575–588; it reads SMEEEEEEDTDEDD. Positions 629-728 constitute a BRCT domain; sequence LKSKVLADVA…DKVEEQLFPL (100 aa). A phosphoserine mark is found at S674 and S740. Disordered regions lie at residues 730-752 and 780-949; these read DDHTKAQRENSPAAFPDREGVPP and KLIR…ADEM. K780 bears the N6-acetyllysine mark. Residues 793 to 803 are compositionally biased toward polar residues; it reads SSSLPIRQEPS. S839 is subject to Phosphoserine. Residues 850–859 show a composition bias toward basic and acidic residues; the sequence is CKEDLESMDK. Acidic residues-rich tracts occupy residues 860 to 873 and 937 to 947; these read EVDDILGEGSDDSD and NEDEGSSSEAD. S869 and S872 each carry phosphoserine.

In terms of assembly, homodimer. Interacts with GTF2F1. Interacts with WDR77, SNRPB and SNRNP70. Post-translationally, phosphorylated. In the presence of TFIIF, the phosphorylated form has an increased CTD phosphatase activity. The phosphorylation is required for the physical interaction with GTF2F1. Ubiquitously expressed.

It is found in the nucleus. It localises to the cytoplasm. The protein localises to the cytoskeleton. Its subcellular location is the microtubule organizing center. The protein resides in the centrosome. It is found in the spindle pole. It localises to the midbody. It catalyses the reaction O-phospho-L-seryl-[protein] + H2O = L-seryl-[protein] + phosphate. The enzyme catalyses O-phospho-L-threonyl-[protein] + H2O = L-threonyl-[protein] + phosphate. In terms of biological role, processively dephosphorylates 'Ser-2' and 'Ser-5' of the heptad repeats YSPTSPS in the C-terminal domain of the largest RNA polymerase II subunit. This promotes the activity of RNA polymerase II. Plays a role in the exit from mitosis by dephosphorylating crucial mitotic substrates (USP44, CDC20 and WEE1) that are required for M-phase-promoting factor (MPF)/CDK1 inactivation. The chain is RNA polymerase II subunit A C-terminal domain phosphatase (CTDP1) from Homo sapiens (Human).